The chain runs to 67 residues: Large ribosomal subunit protein bL32 (67 aa).

Residues Met-1–Gln-19 are compositionally biased toward basic residues. Residues Met-1–Trp-20 are disordered.

The protein belongs to the bacterial ribosomal protein bL32 family.

The protein is Large ribosomal subunit protein bL32 of Leifsonia xyli subsp. xyli (strain CTCB07).